A 259-amino-acid polypeptide reads, in one-letter code: MSTPLDHSIRNPISSAEVPPELSENIILTSLDDIYNWARISSIYPLMYGTACCFIEFAAMIASRFDMERFGMFPRASPRQADLIILAGTLTMQMAVPTRRLYDQMPEPKYVIAMGACMITGGMFSADSPTALRGADKLLPIDVYIPGCPPRPEAILDAVTKLRKKIANESPQERQNLQQTHRFYSIAHQMRPAPPLHTGKYLLSETRQQPPQALAEVMGMNIPAFQSPEQQELLLQSGQQRELISREVDEAYKSSSKMY.

The [4Fe-4S] cluster site is built by Cys52, Cys53, Cys117, and Cys148.

This sequence belongs to the complex I 20 kDa subunit family. In terms of assembly, NDH-1 can be composed of about 15 different subunits; different subcomplexes with different compositions have been identified which probably have different functions. The cofactor is [4Fe-4S] cluster.

It localises to the cellular thylakoid membrane. The catalysed reaction is a plastoquinone + NADH + (n+1) H(+)(in) = a plastoquinol + NAD(+) + n H(+)(out). It catalyses the reaction a plastoquinone + NADPH + (n+1) H(+)(in) = a plastoquinol + NADP(+) + n H(+)(out). Its function is as follows. NDH-1 shuttles electrons from an unknown electron donor, via FMN and iron-sulfur (Fe-S) centers, to quinones in the respiratory and/or the photosynthetic chain. The immediate electron acceptor for the enzyme in this species is believed to be plastoquinone. Couples the redox reaction to proton translocation, and thus conserves the redox energy in a proton gradient. Cyanobacterial NDH-1 also plays a role in inorganic carbon-concentration. This is NAD(P)H-quinone oxidoreductase subunit K 2 (ndhK2) from Cyanothece sp. (strain PCC 7425 / ATCC 29141).